Here is a 151-residue protein sequence, read N- to C-terminus: Deoxyuridine 5'-triphosphate nucleotidohydrolase (151 aa).

Substrate-binding positions include 70-72 (RSG), N83, 87-89 (LID), and M97.

It belongs to the dUTPase family. Requires Mg(2+) as cofactor.

It carries out the reaction dUTP + H2O = dUMP + diphosphate + H(+). The protein operates within pyrimidine metabolism; dUMP biosynthesis; dUMP from dCTP (dUTP route): step 2/2. Functionally, this enzyme is involved in nucleotide metabolism: it produces dUMP, the immediate precursor of thymidine nucleotides and it decreases the intracellular concentration of dUTP so that uracil cannot be incorporated into DNA. The polypeptide is Deoxyuridine 5'-triphosphate nucleotidohydrolase (Pseudomonas putida (strain W619)).